We begin with the raw amino-acid sequence, 216 residues long: Ribose-5-phosphate isomerase A (216 aa).

Residues Thr-26 to Thr-29, Asp-79 to Asp-82, and Lys-92 to Gly-95 each bind substrate. Glu-101 (proton acceptor) is an active-site residue. Lys-119 provides a ligand contact to substrate.

The protein belongs to the ribose 5-phosphate isomerase family. As to quaternary structure, homodimer.

The enzyme catalyses aldehydo-D-ribose 5-phosphate = D-ribulose 5-phosphate. It functions in the pathway carbohydrate degradation; pentose phosphate pathway; D-ribose 5-phosphate from D-ribulose 5-phosphate (non-oxidative stage): step 1/1. Functionally, catalyzes the reversible conversion of ribose-5-phosphate to ribulose 5-phosphate. In Legionella pneumophila (strain Corby), this protein is Ribose-5-phosphate isomerase A.